Consider the following 1005-residue polypeptide: Myosin IE heavy chain (1005 aa).

In terms of domain architecture, Myosin motor spans 8-693 (EGVPDFVLLN…TLFYFEEKRE (686 aa)). An ATP-binding site is contributed by 101-108 (GESGAGKT). A disordered region spans residues 539–562 (SDPLVQGLFPPTRPEDSKKRPETA). Over residues 551–560 (RPEDSKKRPE) the composition is skewed to basic and acidic residues. The actin-binding stretch occupies residues 556–630 (KKRPETAGSQ…RAGFAGRIEY (75 aa)). 2 consecutive IQ domains span residues 694-722 (LEMPRIVTLIQKTWRGYRARSKWNQRKAA) and 716-745 (WNQRKAAIKIQLFYRSYRYKKWFRELHRAF). The 195-residue stretch at 810-1004 (KKKWDFRRHF…KGNQATIQFK (195 aa)) folds into the TH1 domain.

Belongs to the TRAFAC class myosin-kinesin ATPase superfamily. Myosin family. As to quaternary structure, myosin I heavy chain is single-headed. Dimer of a heavy and a light chain. Inability to self-assemble into filaments.

Myosin is a protein that binds to actin and has ATPase activity that is activated by actin. May play a role in moving membranes relative to actin. In Dictyostelium discoideum (Social amoeba), this protein is Myosin IE heavy chain (myoE).